Reading from the N-terminus, the 566-residue chain is Bifunctional NADP phosphatase/NAD kinase (566 aa).

The segment at 1–283 (MDMLEMALNI…KLVGIFGNRW (283 aa)) is NADP phosphatase. Mg(2+)-binding residues include E66, D85, V87, D88, and D229. Positions 275–566 (LVGIFGNRWR…YNKLKKLSLM (292 aa)) are NAD kinase. D355 acts as the Proton acceptor in catalysis. Residues 355-356 (DG), R360, 430-431 (NE), K441, R458, D460, 471-476 (TAYSLS), and N528 contribute to the NAD(+) site.

This sequence in the N-terminal section; belongs to the inositol monophosphatase superfamily. The protein in the C-terminal section; belongs to the NAD kinase family. In terms of assembly, homotetramer. Mg(2+) serves as cofactor.

It is found in the cytoplasm. The catalysed reaction is NAD(+) + ATP = ADP + NADP(+) + H(+). The enzyme catalyses NADP(+) + H2O = phosphate + NAD(+). Involved in the regulation of the intracellular balance between NAD(H) and NADP(H), and is a key enzyme in the biosynthesis of NADP. Catalyzes the phosphorylation and dephosphorylation of NAD and NADP, respectively. Although it shows conflicting dual activities and is able to supply NADP, it seems that its physiological role is to prevent excess accumulation of NADP. This Methanococcus maripaludis (strain DSM 14266 / JCM 13030 / NBRC 101832 / S2 / LL) protein is Bifunctional NADP phosphatase/NAD kinase.